A 609-amino-acid polypeptide reads, in one-letter code: Pair-rule protein odd-paired (609 aa).

Positions 20 to 41 (RMSPNTTASNSNAQQQQQQQLE) are disordered. Residues 22–32 (SPNTTASNSNA) show a composition bias toward polar residues. The segment at 210–249 (MQCLWIDPDQPGLVPPGGRKTCNKVFHSMHEIVTHLTVEH) adopts a C2H2-type 1; atypical zinc-finger fold. C2H2-type zinc fingers lie at residues 258 to 285 (HACF…IRVH), 291 to 315 (FACP…KRTH), 321 to 345 (FKCE…SHVH), and 351 to 375 (YNCR…MKVH). 2 disordered regions span residues 373-550 (KVHG…ASAS) and 583-609 (EAMN…ATAY). Polar residues predominate over residues 399 to 409 (IITGGAQTPPS). 2 stretches are compositionally biased toward low complexity: residues 414-434 (GSAG…IKSS) and 449-498 (HLGA…LTAH). A compositionally biased stretch (basic residues) spans 528 to 537 (SHHHHPHHHQ). A compositionally biased stretch (low complexity) spans 538–550 (AAPSPGAAAASAS). Residues 591 to 601 (FGHHHHHHHLM) are compositionally biased toward basic residues.

The protein belongs to the GLI C2H2-type zinc-finger protein family. In terms of tissue distribution, expressed throughout all segment primordia; expressed ubiquitously in the ectoderm and mesoderm precursors.

It localises to the nucleus. Functionally, transcription factor essential for parasegmental subdivision of the embryo. It is involved in the activation of wingless (wg) in odd parasegments. It is also required for the timely activation of wg in the remaining parasegments and for the timely activation of engrailed (en) in all parasegments. The sequence is that of Pair-rule protein odd-paired (opa) from Drosophila melanogaster (Fruit fly).